The primary structure comprises 160 residues: Glyoxalase domain-containing protein 5 (160 aa).

The region spanning arginine 33 to tyrosine 153 is the VOC domain.

The protein belongs to the glyoxalase I family.

This is Glyoxalase domain-containing protein 5 (glod5) from Xenopus laevis (African clawed frog).